Consider the following 76-residue polypeptide: DNA-directed RNA polymerase subunit epsilon (76 aa).

It belongs to the RNA polymerase subunit epsilon family. RNAP is composed of a core of 2 alpha, a beta and a beta' subunit. The core is associated with a delta subunit, and at least one of epsilon or omega. When a sigma factor is associated with the core the holoenzyme is formed, which can initiate transcription.

The enzyme catalyses RNA(n) + a ribonucleoside 5'-triphosphate = RNA(n+1) + diphosphate. A non-essential component of RNA polymerase (RNAP). This chain is DNA-directed RNA polymerase subunit epsilon, found in Lactococcus lactis subsp. lactis (strain IL1403) (Streptococcus lactis).